A 127-amino-acid chain; its full sequence is Fluoride-specific ion channel FluC (127 aa).

The next 4 helical transmembrane spans lie at Leu6–Phe26, Thr37–Ala57, Leu67–Val87, and Leu96–Leu116. The Na(+) site is built by Gly75 and Thr78.

It belongs to the fluoride channel Fluc/FEX (TC 1.A.43) family.

Its subcellular location is the cell inner membrane. It catalyses the reaction fluoride(in) = fluoride(out). Its activity is regulated as follows. Na(+) is not transported, but it plays an essential structural role and its presence is essential for fluoride channel function. Its function is as follows. Fluoride-specific ion channel. Important for reducing fluoride concentration in the cell, thus reducing its toxicity. The sequence is that of Fluoride-specific ion channel FluC from Tolumonas auensis (strain DSM 9187 / NBRC 110442 / TA 4).